The primary structure comprises 466 residues: 55 kDa erythrocyte membrane protein (466 aa).

Position 2 is an N-acetylthreonine (Thr2). Phosphoserine occurs at positions 13 and 19. A Phosphothreonine modification is found at Thr49. 3 positions are modified to phosphoserine: Ser52, Ser57, and Ser110. The 82-residue stretch at Leu71–Gln152 folds into the PDZ domain. Positions Ala158–Val228 constitute an SH3 domain. At Ser243 the chain carries Phosphoserine. An interaction with PALS1 region spans residues Val268–Tyr466. Residues Arg282–Asp451 enclose the Guanylate kinase-like domain.

It belongs to the MAGUK family. Heterodimer with PALS1. Interacts with DLG5 and NF2. Interacts (via guanylate kinase-like domain) with WHRN (via third PDZ domain). In terms of processing, palmitoylated.

It is found in the cell membrane. It localises to the cell projection. The protein resides in the stereocilium. Its function is as follows. Essential regulator of neutrophil polarity. Regulates neutrophil polarization by regulating AKT1 phosphorylation through a mechanism that is independent of PIK3CG activity. This is 55 kDa erythrocyte membrane protein (MPP1) from Papio anubis (Olive baboon).